The following is a 448-amino-acid chain: UDP-N-acetylmuramoylalanine--D-glutamate ligase (448 aa).

Residue 112–118 (GSNAKST) coordinates ATP.

The protein belongs to the MurCDEF family.

The protein localises to the cytoplasm. The enzyme catalyses UDP-N-acetyl-alpha-D-muramoyl-L-alanine + D-glutamate + ATP = UDP-N-acetyl-alpha-D-muramoyl-L-alanyl-D-glutamate + ADP + phosphate + H(+). Its pathway is cell wall biogenesis; peptidoglycan biosynthesis. Functionally, cell wall formation. Catalyzes the addition of glutamate to the nucleotide precursor UDP-N-acetylmuramoyl-L-alanine (UMA). This Acinetobacter baumannii (strain ACICU) protein is UDP-N-acetylmuramoylalanine--D-glutamate ligase.